We begin with the raw amino-acid sequence, 107 residues long: uncharacterized protein (107 aa).

A run of 2 helical transmembrane segments spans residues 14-34 (YLAEFLLGLTALFGLYLIVAW) and 68-88 (FFVFLGYVAHIIPFTAFLVPI).

It localises to the cell membrane. This is an uncharacterized protein from Haemophilus influenzae (strain ATCC 51907 / DSM 11121 / KW20 / Rd).